A 525-amino-acid polypeptide reads, in one-letter code: Vesicular inhibitory amino acid transporter (525 aa).

The Cytoplasmic segment spans residues 1-132; the sequence is MATLLRSKLS…WNVTNAIQGM (132 aa). Residues 83-107 are disordered; it reads IHYQRGSGAPLPPSGSKDQVGGGGE. The chain crosses the membrane as a helical span at residues 133-153; it reads FVLGLPYAILHGGYLGLFLII. The Lumenal, vesicle portion of the chain corresponds to 154–204; that stretch reads FAAVVCCYTGKILIACLYEENEDGEVVRVRDSYVAIANACCAPRFPTLGGR. The residue at position 186 (tyrosine 186) is a 3'-nitrotyrosine. The helical transmembrane segment at 205 to 225 threads the bilayer; it reads VVNVAQIIELVMTCILYVVVS. Residues 226 to 265 lie on the Cytoplasmic side of the membrane; sequence GNLMYNSFPGLPVSQKSWSIIATAVLLPCAFLKNLKAVSK. A helical membrane pass occupies residues 266–286; the sequence is FSLLCTLAHFVINILVIAYCL. The Lumenal, vesicle segment spans residues 287–305; sequence SRARDWAWEKVKFYIDVKK. The chain crosses the membrane as a helical span at residues 306–326; sequence FPISIGIIVFSYTSQIFLPSL. Residues 327-341 are Cytoplasmic-facing; it reads EGNMQQPSEFHCMMN. A helical membrane pass occupies residues 342-362; the sequence is WTHIAACVLKGLFALVAYLTW. Over 363 to 383 the chain is Lumenal, vesicle; the sequence is ADETKEVITDNLPGSIRAVVN. A helical membrane pass occupies residues 384 to 404; that stretch reads IFLVAKALLSYPLPFFAAVEV. Residues 405–438 lie on the Cytoplasmic side of the membrane; that stretch reads LEKSLFQEGSRAFFPACYSGDGRLKSWGLTLRCA. Residues 439-459 form a helical membrane-spanning segment; sequence LVVFTLLMAIYVPHFALLMGL. Topologically, residues 460-461 are lumenal, vesicle; sequence TG. The helical transmembrane segment at 462–482 threads the bilayer; sequence SLTGAGLCFLLPSLFHLRLLW. At 483-489 the chain is on the cytoplasmic side; sequence RKLLWHQ. A helical transmembrane segment spans residues 490 to 510; sequence VFFDVAIFVIGGICSVSGFVH. Residues 511–525 lie on the Lumenal, vesicle side of the membrane; the sequence is SLEGLIEAYRTNAED.

Belongs to the amino acid/polyamine transporter 2 family. In terms of tissue distribution, retina. Expressed throughout the horizontal cells or more specifically at the terminals.

It is found in the cytoplasmic vesicle membrane. Its subcellular location is the presynapse. The catalysed reaction is 4-aminobutanoate(out) + n H(+)(in) = 4-aminobutanoate(in) + n H(+)(out). It catalyses the reaction glycine(out) + n H(+)(in) = glycine(in) + n H(+)(out). The enzyme catalyses beta-alanine(out) + n H(+)(in) = beta-alanine(in) + n H(+)(out). Functionally, antiporter that exchanges vesicular protons for cytosolic 4-aminobutanoate or to a lesser extend glycine, thus allowing their secretion from nerve terminals. The transport is equally dependent on the chemical and electrical components of the proton gradient. May also transport beta-alanine. Acidification of GABAergic synaptic vesicles is a prerequisite for 4-aminobutanoate uptake. The chain is Vesicular inhibitory amino acid transporter from Homo sapiens (Human).